We begin with the raw amino-acid sequence, 339 residues long: Methionine import ATP-binding protein MetN 1 (339 aa).

In terms of domain architecture, ABC transporter spans I2–V241. G38–S45 serves as a coordination point for ATP.

It belongs to the ABC transporter superfamily. Methionine importer (TC 3.A.1.24) family. The complex is composed of two ATP-binding proteins (MetN), two transmembrane proteins (MetI) and a solute-binding protein (MetQ).

Its subcellular location is the cell membrane. It catalyses the reaction L-methionine(out) + ATP + H2O = L-methionine(in) + ADP + phosphate + H(+). It carries out the reaction D-methionine(out) + ATP + H2O = D-methionine(in) + ADP + phosphate + H(+). Its function is as follows. Part of the ABC transporter complex MetNIQ involved in methionine import. Responsible for energy coupling to the transport system. In Bacillus thuringiensis subsp. konkukian (strain 97-27), this protein is Methionine import ATP-binding protein MetN 1.